The following is a 983-amino-acid chain: Probable beta-galactosidase C (983 aa).

The signal sequence occupies residues 1–23 (MRIFSFLFLLLLGILTGQGLVSG). Substrate is bound by residues Y82, N127, A128, E129, and N187. Residue E188 is the Proton donor of the active site. N-linked (GlcNAc...) asparagine glycosylation occurs at N197. Residue Y251 coordinates substrate. A disulfide bond links C257 and C304. N276 carries N-linked (GlcNAc...) asparagine glycosylation. The active-site Nucleophile is E287. Y353 serves as a coordination point for substrate. Residues N391, N434, N466, N516, N601, N676, N714, N719, N758, and N804 are each glycosylated (N-linked (GlcNAc...) asparagine).

It belongs to the glycosyl hydrolase 35 family.

Its subcellular location is the secreted. The enzyme catalyses Hydrolysis of terminal non-reducing beta-D-galactose residues in beta-D-galactosides.. Functionally, cleaves beta-linked terminal galactosyl residues from gangliosides, glycoproteins, and glycosaminoglycans. This is Probable beta-galactosidase C (lacC) from Aspergillus fumigatus (strain CBS 144.89 / FGSC A1163 / CEA10) (Neosartorya fumigata).